A 353-amino-acid chain; its full sequence is RNA 3'-terminal phosphate cyclase (353 aa).

ATP contacts are provided by residues glutamine 103 and 297-301 (HLADQ). Catalysis depends on histidine 322, which acts as the Tele-AMP-histidine intermediate.

Belongs to the RNA 3'-terminal cyclase family. Type 1 subfamily.

The protein localises to the cytoplasm. It carries out the reaction a 3'-end 3'-phospho-ribonucleotide-RNA + ATP = a 3'-end 2',3'-cyclophospho-ribonucleotide-RNA + AMP + diphosphate. Its function is as follows. Catalyzes the conversion of 3'-phosphate to a 2',3'-cyclic phosphodiester at the end of RNA. The mechanism of action of the enzyme occurs in 3 steps: (A) adenylation of the enzyme by ATP; (B) transfer of adenylate to an RNA-N3'P to produce RNA-N3'PP5'A; (C) and attack of the adjacent 2'-hydroxyl on the 3'-phosphorus in the diester linkage to produce the cyclic end product. The biological role of this enzyme is unknown but it is likely to function in some aspects of cellular RNA processing. The chain is RNA 3'-terminal phosphate cyclase from Salmonella heidelberg (strain SL476).